The following is a 324-amino-acid chain: Bile salt hydrolase/transferase (324 aa).

Cys2 serves as the catalytic Nucleophile; acyl-thioester intermediate. The deoxycholate site is built by Cys2 and Arg16. Residue Asn79 participates in taurine binding.

This sequence belongs to the peptidase C59 family. In terms of assembly, homotetramer. The tetramer consists of a dimer of dimers.

It catalyses the reaction glycocholate + H2O = cholate + glycine. The enzyme catalyses glycodeoxycholate + H2O = deoxycholate + glycine. It carries out the reaction chenodeoxycholate + glycine = glycochenodeoxycholate + H2O. The catalysed reaction is cholate + taurine = taurocholate + H2O. It catalyses the reaction taurodeoxycholate + H2O = deoxycholate + taurine. The enzyme catalyses taurochenodeoxycholate + H2O = chenodeoxycholate + taurine. It carries out the reaction an L-alpha-amino acid + cholate = an N-choloyl-L-alpha-amino acid + H2O. The catalysed reaction is an L-alpha-amino acid + taurocholate = an N-choloyl-L-alpha-amino acid + taurine. It catalyses the reaction glycocholate + an L-alpha-amino acid = an N-choloyl-L-alpha-amino acid + glycine. It participates in lipid metabolism; bile acid biosynthesis. Its function is as follows. Possesses dual functions in bile acid metabolism. Acts as a bile salt hydrolase that catalyzes the deconjugation of glycine- and taurine-linked bile salts, which occurs naturally in the intestines of animals, releasing amino acid residues and deconjugated bile salts (bile acids). Can hydrolyze the amide bond in the bile salts glycocholate (GCA), glycodeoxycholate (GDCA), glycochenodeoxycholate (GCDCA), taurocholate (TCA), taurodeoxycholate (TDCA) and taurochenodeoxycholate (TCDCA). Shows a preference for glycine-conjugated bile acids as substrates. Also acts as an amine N-acyltransferase that conjugates a wide variety of amino acids to conjugated and non-conjugated bile acids, thus producing bacterial bile acid amidates (BBAAs) - also named microbially conjugated bile acids (MCBAs) - in the gastrointestinal tract. These BBAAs may facilitate communication between the microbiota and host through the activation of host ligand-activated transcription factors. This is Bile salt hydrolase/transferase from Lactiplantibacillus plantarum (strain ATCC BAA-793 / NCIMB 8826 / WCFS1) (Lactobacillus plantarum).